A 177-amino-acid chain; its full sequence is Large ribosomal subunit protein uL6 (177 aa).

It belongs to the universal ribosomal protein uL6 family. As to quaternary structure, part of the 50S ribosomal subunit.

Functionally, this protein binds to the 23S rRNA, and is important in its secondary structure. It is located near the subunit interface in the base of the L7/L12 stalk, and near the tRNA binding site of the peptidyltransferase center. In Bordetella avium (strain 197N), this protein is Large ribosomal subunit protein uL6.